We begin with the raw amino-acid sequence, 276 residues long: Putative respiratory nitrate reductase heme subunit ORF7 (276 aa).

The heme b site is built by M138 and K228.

In terms of assembly, probable multiprotein complex; a catalytic heterodimer of an alpha and beta chain is proposed to associate with additional subunits involved in membrane attachment and electron transfer. Requires heme b as cofactor.

The protein resides in the cell membrane. Functionally, the respiratory membrane-bound nitrate reductase enzyme complex plays a role in generation of metabolic energy by using nitrate as a terminal electron acceptor during anaerobic conditions. May transfer electrons to the iron-sulfur centers of the catalytic beta subunit. The protein is Putative respiratory nitrate reductase heme subunit ORF7 of Haloferax mediterranei (strain ATCC 33500 / DSM 1411 / JCM 8866 / NBRC 14739 / NCIMB 2177 / R-4) (Halobacterium mediterranei).